The primary structure comprises 122 residues: Large ribosomal subunit protein uL14 (122 aa).

It belongs to the universal ribosomal protein uL14 family. As to quaternary structure, part of the 50S ribosomal subunit. Forms a cluster with proteins L3 and L19. In the 70S ribosome, L14 and L19 interact and together make contacts with the 16S rRNA in bridges B5 and B8.

Functionally, binds to 23S rRNA. Forms part of two intersubunit bridges in the 70S ribosome. The polypeptide is Large ribosomal subunit protein uL14 (Rickettsia bellii (strain OSU 85-389)).